We begin with the raw amino-acid sequence, 204 residues long: Small heat shock protein, chloroplastic (204 aa).

The tract at residues 34–55 (QMGRVDHDHELDDRSNRAPISR) is disordered. Over residues 37 to 49 (RVDHDHELDDRSN) the composition is skewed to basic and acidic residues. The sHSP domain maps to 98 to 204 (GSGRAMRRGW…KKDVFQVMVD (107 aa)).

Belongs to the small heat shock protein (HSP20) family.

It is found in the plastid. Its subcellular location is the chloroplast stroma. In Oxybasis rubra (Red goosefoot), this protein is Small heat shock protein, chloroplastic (HSP23).